Here is a 569-residue protein sequence, read N- to C-terminus: Glucose-6-phosphate isomerase, cytosolic 1A (569 aa).

Glu360 serves as the catalytic Proton donor. Residues His391 and Lys516 contribute to the active site.

It belongs to the GPI family. As to quaternary structure, homodimer.

The protein localises to the cytoplasm. The catalysed reaction is alpha-D-glucose 6-phosphate = beta-D-fructose 6-phosphate. Its pathway is carbohydrate degradation; glycolysis; D-glyceraldehyde 3-phosphate and glycerone phosphate from D-glucose: step 2/4. In Clarkia lewisii (Farewell-to-spring), this protein is Glucose-6-phosphate isomerase, cytosolic 1A (PGIC1-A).